The sequence spans 591 residues: L-fucose isomerase (591 aa).

Active-site proton acceptor residues include E337 and D361. Positions 337, 361, and 528 each coordinate Mn(2+).

It belongs to the L-fucose isomerase family. Homohexamer. Mn(2+) is required as a cofactor.

It is found in the cytoplasm. The catalysed reaction is L-fucose = L-fuculose. It functions in the pathway carbohydrate degradation; L-fucose degradation; L-lactaldehyde and glycerone phosphate from L-fucose: step 1/3. Functionally, converts the aldose L-fucose into the corresponding ketose L-fuculose. This chain is L-fucose isomerase, found in Escherichia coli O6:K15:H31 (strain 536 / UPEC).